A 413-amino-acid chain; its full sequence is Serine hydroxymethyltransferase (413 aa).

(6S)-5,6,7,8-tetrahydrofolate-binding positions include L117 and 121–123; that span reads GHL. Residue K226 is modified to N6-(pyridoxal phosphate)lysine. Residue 349 to 351 participates in (6S)-5,6,7,8-tetrahydrofolate binding; the sequence is SPF.

It belongs to the SHMT family. Homodimer. It depends on pyridoxal 5'-phosphate as a cofactor.

It localises to the cytoplasm. It catalyses the reaction (6R)-5,10-methylene-5,6,7,8-tetrahydrofolate + glycine + H2O = (6S)-5,6,7,8-tetrahydrofolate + L-serine. Its pathway is one-carbon metabolism; tetrahydrofolate interconversion. The protein operates within amino-acid biosynthesis; glycine biosynthesis; glycine from L-serine: step 1/1. Its function is as follows. Catalyzes the reversible interconversion of serine and glycine with tetrahydrofolate (THF) serving as the one-carbon carrier. This reaction serves as the major source of one-carbon groups required for the biosynthesis of purines, thymidylate, methionine, and other important biomolecules. Also exhibits THF-independent aldolase activity toward beta-hydroxyamino acids, producing glycine and aldehydes, via a retro-aldol mechanism. The polypeptide is Serine hydroxymethyltransferase (Listeria welshimeri serovar 6b (strain ATCC 35897 / DSM 20650 / CCUG 15529 / CIP 8149 / NCTC 11857 / SLCC 5334 / V8)).